The chain runs to 676 residues: WD repeat-containing protein 48 (676 aa).

The residue at position 28 (Tyr28) is a Phosphotyrosine. 8 WD repeats span residues 28-67 (YNRNGVNALQLDPALNRLFTAGRDSIIRIWSVNQHKQDPY), 73-112 (HHTDWVNDVVLCCNGKTLISASSDTTVKVWNAHKGFCMST), 115-154 (THKDYVKALAYAKDKELVASAGLDRQIFLWDVNTLTALTA), 166-205 (GNKDSIYSLAMNQLGTIIVSGSTEKVLRVWDPRTCAKLMK), 208-247 (GHTDNVKALLLHRDGTQCLSGSSDGTIRLWSLGQQRCIAT), 250-289 (VHDEGVWALQVNDAFTHVYSGGRDRKIYCTDLRNPDIRVL), 292-334 (EEKA…NFRA), and 358-397 (KGGASIIQCHILNDKRHILTKDTNNNVAYWDVLKACKVED). Residue Lys214 is modified to N6-acetyllysine. Lys578 carries the post-translational modification N6-acetyllysine. Residues 607–628 (LDNESQTTSSSNNEKPEQEKEE) form a disordered region. Positions 609–619 (NESQTTSSSNN) are enriched in low complexity. Thr613 carries the post-translational modification Phosphothreonine.

It belongs to the WD repeat WDR48 family. In terms of assembly, interacts with USP46. Interacts with USP1. Interacts with USP12. Component of the USP12-WDR20-WDR48 deubiquitinating complex. Component of the USP12-DMWD-WDR48 deubiquitinating complex. Interacts with PHLPP1. Interacts with RAD51AP1; the interaction is direct and promotes formation of a trimeric complex with RAD51 via RAD51AP1. Interacts with ATAD5; the interaction regulates USP1-mediated PCNA deubiquitination. Interacts with RAD51; the interaction is enhanced under replication stress. Interacts with ITCH; the interaction is more efficient when both USP12 and WDR48/UAF1 are involved and may facilitate recruitment of the USP12 deubiquitinating complex to Notch.

The protein resides in the nucleus. Its subcellular location is the cytoplasm. It is found in the lysosome. It localises to the late endosome. Its function is as follows. Regulator of deubiquitinating complexes, which acts as a strong activator of USP1, USP12 and USP46. Enhances the USP1-mediated deubiquitination of FANCD2; USP1 being almost inactive by itself. Activates deubiquitination by increasing the catalytic turnover without increasing the affinity of deubiquitinating enzymes for the substrate. Also activates deubiquitinating activity of complexes containing USP12. Docks at the distal end of the USP12 fingers domain and induces a cascade of structural changes leading to the activation of the enzyme. Together with RAD51AP1, promotes DNA repair by stimulating RAD51-mediated homologous recombination. Binds single-stranded DNA (ssDNA) and double-stranded DNA (dsDNA). DNA-binding is required both for USP1-mediated deubiquitination of FANCD2 and stimulation of RAD51-mediated homologous recombination: both WDR48/UAF1 and RAD51AP1 have coordinated role in DNA-binding during these processes. Together with ATAD5 and by regulating USP1 activity, has a role in PCNA-mediated translesion synthesis (TLS) by deubiquitinating monoubiquitinated PCNA. Together with ATAD5, has a role in recruiting RAD51 to stalled forks during replication stress. This is WD repeat-containing protein 48 (Wdr48) from Mus musculus (Mouse).